The following is a 211-amino-acid chain: Peptide methionine sulfoxide reductase MsrA (211 aa).

C52 is an active-site residue.

The protein belongs to the MsrA Met sulfoxide reductase family.

The catalysed reaction is L-methionyl-[protein] + [thioredoxin]-disulfide + H2O = L-methionyl-(S)-S-oxide-[protein] + [thioredoxin]-dithiol. It catalyses the reaction [thioredoxin]-disulfide + L-methionine + H2O = L-methionine (S)-S-oxide + [thioredoxin]-dithiol. Functionally, has an important function as a repair enzyme for proteins that have been inactivated by oxidation. Catalyzes the reversible oxidation-reduction of methionine sulfoxide in proteins to methionine. This Photobacterium profundum (strain SS9) protein is Peptide methionine sulfoxide reductase MsrA.